The chain runs to 145 residues: D-aminoacyl-tRNA deacylase (145 aa).

A Gly-cisPro motif, important for rejection of L-amino acids motif is present at residues 137–138 (GP).

It belongs to the DTD family. In terms of assembly, homodimer.

It localises to the cytoplasm. The enzyme catalyses glycyl-tRNA(Ala) + H2O = tRNA(Ala) + glycine + H(+). The catalysed reaction is a D-aminoacyl-tRNA + H2O = a tRNA + a D-alpha-amino acid + H(+). An aminoacyl-tRNA editing enzyme that deacylates mischarged D-aminoacyl-tRNAs. Also deacylates mischarged glycyl-tRNA(Ala), protecting cells against glycine mischarging by AlaRS. Acts via tRNA-based rather than protein-based catalysis; rejects L-amino acids rather than detecting D-amino acids in the active site. By recycling D-aminoacyl-tRNA to D-amino acids and free tRNA molecules, this enzyme counteracts the toxicity associated with the formation of D-aminoacyl-tRNA entities in vivo and helps enforce protein L-homochirality. This is D-aminoacyl-tRNA deacylase from Enterobacter sp. (strain 638).